Reading from the N-terminus, the 66-residue chain is Large ribosomal subunit protein uL29 (66 aa).

This sequence belongs to the universal ribosomal protein uL29 family.

This Bacillus mycoides (strain KBAB4) (Bacillus weihenstephanensis) protein is Large ribosomal subunit protein uL29.